The chain runs to 600 residues: Elongation factor 4 (600 aa).

Residues 5 to 187 (SRIRNFSIIA…DLIKKIPPPK (183 aa)) form the tr-type G domain. Residues 17 to 22 (DHGKST) and 134 to 137 (NKMD) contribute to the GTP site.

This sequence belongs to the TRAFAC class translation factor GTPase superfamily. Classic translation factor GTPase family. LepA subfamily.

Its subcellular location is the cell inner membrane. It carries out the reaction GTP + H2O = GDP + phosphate + H(+). In terms of biological role, required for accurate and efficient protein synthesis under certain stress conditions. May act as a fidelity factor of the translation reaction, by catalyzing a one-codon backward translocation of tRNAs on improperly translocated ribosomes. Back-translocation proceeds from a post-translocation (POST) complex to a pre-translocation (PRE) complex, thus giving elongation factor G a second chance to translocate the tRNAs correctly. Binds to ribosomes in a GTP-dependent manner. The polypeptide is Elongation factor 4 (Marinobacter nauticus (strain ATCC 700491 / DSM 11845 / VT8) (Marinobacter aquaeolei)).